Reading from the N-terminus, the 504-residue chain is Anaerobic nitric oxide reductase transcription regulator NorR (504 aa).

The residue at position 57 (aspartate 57) is a 4-aspartylphosphate. The 230-residue stretch at 187-416 folds into the Sigma-54 factor interaction domain; sequence MIGLSPGMTQ…LEHAIHRAVV (230 aa). ATP is bound by residues 215–222 and 278–287; these read GETGTGKE and ADNGTLFLDE. Positions 479–498 form a DNA-binding region, H-T-H motif; sequence WAACARMLETDVANLHRLAK.

It functions in the pathway nitrogen metabolism; nitric oxide reduction. Its function is as follows. Required for the expression of anaerobic nitric oxide (NO) reductase, acts as a transcriptional activator for at least the norVW operon. Activation also requires sigma-54. This chain is Anaerobic nitric oxide reductase transcription regulator NorR, found in Escherichia coli O127:H6 (strain E2348/69 / EPEC).